Here is a 1383-residue protein sequence, read N- to C-terminus: DNA-directed RNA polymerase subunit beta (1383 aa).

It belongs to the RNA polymerase beta chain family. In terms of assembly, the RNAP catalytic core consists of 2 alpha, 1 beta, 1 beta' and 1 omega subunit. When a sigma factor is associated with the core the holoenzyme is formed, which can initiate transcription.

The enzyme catalyses RNA(n) + a ribonucleoside 5'-triphosphate = RNA(n+1) + diphosphate. DNA-dependent RNA polymerase catalyzes the transcription of DNA into RNA using the four ribonucleoside triphosphates as substrates. The polypeptide is DNA-directed RNA polymerase subunit beta (Bartonella bacilliformis (strain ATCC 35685 / KC583 / Herrer 020/F12,63)).